A 266-amino-acid chain; its full sequence is DNA primase (266 aa).

The tract at residues 244 to 266 (VTTTTTPSPPKIGSMQTTTKSTT) is disordered. The span at 257-266 (SMQTTTKSTT) shows a compositional bias: polar residues.

The protein belongs to the baculoviridae LEF-1 family. As to quaternary structure, interacts with LEF-2.

Its function is as follows. Plays an essential role in viral DNA replication. May generates single-stranded DNA for both leading and lagging strand synthesis. The primase initiates primer synthesis and thereby produces large amount of short RNA primers on the lagging strand that the polymerase elongates using dNTPs. The polypeptide is DNA primase (LEF-1) (Autographa californica nuclear polyhedrosis virus (AcMNPV)).